The primary structure comprises 90 residues: Antitoxin epsilon 1 (90 aa).

This sequence belongs to the epsilon antitoxin family. In the presence of the zeta toxin, forms an inactive PezA(2)PezT(2) heterotetramer.

In terms of biological role, antitoxin component of a type II toxin-antitoxin (TA) system. Neutralizes the toxic effect of zeta toxin. Part of a postsegregational killing (PSK) system involved in the killing of plasmid-free cells. Continuous synthesis of the epsilon antitoxin is required to counteract the zeta toxin. The protein is Antitoxin epsilon 1 of Enterococcus faecalis (Streptococcus faecalis).